The following is a 387-amino-acid chain: UDP-N-acetylglucosamine--N-acetylmuramyl-(pentapeptide) pyrophosphoryl-undecaprenol N-acetylglucosamine transferase (387 aa).

UDP-N-acetyl-alpha-D-glucosamine-binding positions include 26–28, Asn-137, Arg-177, Ser-205, and Gln-306; that span reads TGG.

The protein belongs to the glycosyltransferase 28 family. MurG subfamily.

The protein localises to the cell inner membrane. It carries out the reaction di-trans,octa-cis-undecaprenyl diphospho-N-acetyl-alpha-D-muramoyl-L-alanyl-D-glutamyl-meso-2,6-diaminopimeloyl-D-alanyl-D-alanine + UDP-N-acetyl-alpha-D-glucosamine = di-trans,octa-cis-undecaprenyl diphospho-[N-acetyl-alpha-D-glucosaminyl-(1-&gt;4)]-N-acetyl-alpha-D-muramoyl-L-alanyl-D-glutamyl-meso-2,6-diaminopimeloyl-D-alanyl-D-alanine + UDP + H(+). Its pathway is cell wall biogenesis; peptidoglycan biosynthesis. Functionally, cell wall formation. Catalyzes the transfer of a GlcNAc subunit on undecaprenyl-pyrophosphoryl-MurNAc-pentapeptide (lipid intermediate I) to form undecaprenyl-pyrophosphoryl-MurNAc-(pentapeptide)GlcNAc (lipid intermediate II). The polypeptide is UDP-N-acetylglucosamine--N-acetylmuramyl-(pentapeptide) pyrophosphoryl-undecaprenol N-acetylglucosamine transferase (Rhodospirillum rubrum (strain ATCC 11170 / ATH 1.1.1 / DSM 467 / LMG 4362 / NCIMB 8255 / S1)).